The chain runs to 408 residues: Peptidase T (408 aa).

The interval 1 to 28 (MKNQLIDRLTRYTTIDTQSDPKSTTTPS) is disordered. Residues 11–28 (RYTTIDTQSDPKSTTTPS) are compositionally biased toward polar residues. His78 provides a ligand contact to Zn(2+). The active site involves Asp80. Asp140 serves as a coordination point for Zn(2+). Glu174 serves as the catalytic Proton acceptor. Glu175, Asp197, and His379 together coordinate Zn(2+).

The protein belongs to the peptidase M20B family. Zn(2+) serves as cofactor.

The protein localises to the cytoplasm. The enzyme catalyses Release of the N-terminal residue from a tripeptide.. In terms of biological role, cleaves the N-terminal amino acid of tripeptides. The sequence is that of Peptidase T from Staphylococcus aureus (strain USA300 / TCH1516).